The chain runs to 345 residues: Fructose-1,6-bisphosphatase class 1 (345 aa).

4 residues coordinate Mg(2+): glutamate 90, aspartate 109, leucine 111, and aspartate 112. Residues aspartate 112–serine 115 and asparagine 200 contribute to the substrate site. Residue glutamate 272 coordinates Mg(2+).

The protein belongs to the FBPase class 1 family. Homotetramer. The cofactor is Mg(2+).

Its subcellular location is the cytoplasm. It carries out the reaction beta-D-fructose 1,6-bisphosphate + H2O = beta-D-fructose 6-phosphate + phosphate. The protein operates within carbohydrate biosynthesis; gluconeogenesis. In Bradyrhizobium diazoefficiens (strain JCM 10833 / BCRC 13528 / IAM 13628 / NBRC 14792 / USDA 110), this protein is Fructose-1,6-bisphosphatase class 1.